We begin with the raw amino-acid sequence, 299 residues long: GTPase Era (299 aa).

Residues 5–175 (RSGFVCLVGR…IDVLAAALPP (171 aa)) enclose the Era-type G domain. The segment at 13–20 (GRPNTGKS) is G1. 13–20 (GRPNTGKS) serves as a coordination point for GTP. The G2 stretch occupies residues 39-43 (QTTRH). Residues 60 to 63 (DTPG) are G3. Residues 60–64 (DTPGL) and 124–127 (TKID) each bind GTP. The G4 stretch occupies residues 124-127 (TKID). Positions 154–156 (VSA) are G5. A KH type-2 domain is found at 206–285 (VRDELPHSLA…YLDLRVKVAK (80 aa)).

It belongs to the TRAFAC class TrmE-Era-EngA-EngB-Septin-like GTPase superfamily. Era GTPase family. Monomer.

It localises to the cell envelope. The protein resides in the secreted. Its subcellular location is the cell wall. Functionally, exhibits GTPase activity. Binds RNA but is probably not involved in ribosome assembly in mycobacteria. The polypeptide is GTPase Era (Mycobacterium avium (strain 104)).